A 433-amino-acid chain; its full sequence is UDP-N-acetylmuramate--L-alanine ligase (433 aa).

108–114 (GAHGKTS) is an ATP binding site.

It belongs to the MurCDEF family.

It localises to the cytoplasm. It carries out the reaction UDP-N-acetyl-alpha-D-muramate + L-alanine + ATP = UDP-N-acetyl-alpha-D-muramoyl-L-alanine + ADP + phosphate + H(+). Its pathway is cell wall biogenesis; peptidoglycan biosynthesis. Its function is as follows. Cell wall formation. This is UDP-N-acetylmuramate--L-alanine ligase from Anoxybacillus flavithermus (strain DSM 21510 / WK1).